Here is a 308-residue protein sequence, read N- to C-terminus: MSRIRKAPAGILGFPVAPFNTQGKLEEEALFQNIEFLLNEGLEAIFIACGSGEFQSLSQKEYEQMVEVAVSAAGGKVPVYTGVGGNLSTALDWAQLSEKKGADGYLILPPYLVHGEQEGLYQYAKTIIESTDLNAILYQRDNAVLSVEQIKRLTECEQLVGVKDGVGNMDLNINLVYTIGDRLGWLNGMPMAEVTMPAYLPIGFHSYSSAISNYIPHISRMFYDALKNGNDELVKELYRHVILPINDIRKQRKGYAVSLIKAGMEIMGLNVRNTARPPVGPVEKDHYQQLEAILKQAADRFPKKAATV.

Belongs to the DapA family.

It catalyses the reaction 5-dehydro-4-deoxy-D-glucarate + H(+) = 2,5-dioxopentanoate + CO2 + H2O. The protein operates within carbohydrate acid metabolism; D-glucarate degradation; 2,5-dioxopentanoate from D-glucarate: step 2/2. This is Probable 5-dehydro-4-deoxyglucarate dehydratase (ycbC) from Bacillus subtilis (strain 168).